The chain runs to 427 residues: Glutamate-1-semialdehyde 2,1-aminomutase (427 aa).

Position 265 is an N6-(pyridoxal phosphate)lysine (Lys265).

This sequence belongs to the class-III pyridoxal-phosphate-dependent aminotransferase family. HemL subfamily. As to quaternary structure, homodimer. It depends on pyridoxal 5'-phosphate as a cofactor.

Its subcellular location is the cytoplasm. It carries out the reaction (S)-4-amino-5-oxopentanoate = 5-aminolevulinate. It functions in the pathway porphyrin-containing compound metabolism; protoporphyrin-IX biosynthesis; 5-aminolevulinate from L-glutamyl-tRNA(Glu): step 2/2. This chain is Glutamate-1-semialdehyde 2,1-aminomutase, found in Pseudomonas fluorescens (strain SBW25).